Here is a 689-residue protein sequence, read N- to C-terminus: Collagen alpha-2(IX) chain (689 aa).

The N-terminal stretch at 1 to 23 is a signal peptide; it reads MAAATASPRSLLVLLQVVVLALA. The segment at 26-518 is disordered; sequence RGPPGERGPP…QPGRQGVEGR (493 aa). Residues 27–163 form a triple-helical region 4 (COL4) region; it reads GPPGERGPPG…PGKPGRPGTI (137 aa). Pro residues predominate over residues 31-43; the sequence is ERGPPGPPGPPGV. A compositionally biased stretch (low complexity) spans 44 to 56; the sequence is PGSDGIDGDNGPP. Composition is skewed to pro residues over residues 106–127 and 144–157; these read LPGP…PGPV and PDGP…PGKP. Position 160 is a 4-hydroxyproline (Pro160). Positions 164 to 180 are nonhelical region 4 (NC4); it reads QGLEGSADFLCPTNCPP. Ser169 is a glycosylation site (O-linked (Xyl...) (glycosaminoglycan) serine). Residues 181–519 are triple-helical region 3 (COL3); the sequence is GMKGPPGLQG…PGRQGVEGRD (339 aa). Lys183 carries the 5-hydroxylysine modification. A glycan (O-linked (Gal...) hydroxylysine) is linked at Lys183. Positions 343–352 are enriched in gly residues; it reads GTKGGPGDQG. 2 stretches are compositionally biased toward low complexity: residues 353–366 and 393–413; these read EPGP…SGPP and RGPV…EQGP. The interval 520–549 is nonhelical region 3 (NC3); it reads ATDQHIVDVALKMLQEQLAEVAVSAKREAL. The segment at 550-632 is triple-helical region 2 (COL2); sequence GAVGMMGPPG…PGLPGRPGQA (83 aa). Residues 554–663 form a disordered region; the sequence is MMGPPGPPGP…LPGPVGLPGF (110 aa). Residues 557-566 show a composition bias toward pro residues; sequence PPGPPGPPGY. Basic and acidic residues predominate over residues 599 to 611; sequence KRGEKGDPGEVGR. The tract at residues 633–634 is nonhelical region 2 (NC2); the sequence is IN. Residues 635 to 664 are triple-helical region 1 (COL1); it reads GKDGDRGSPGAPGEAGRPGLPGPVGLPGFC. Positions 665-689 are nonhelical region 1 (NC1); that stretch reads EPAACLGASAYASARLTEPGSIKGP.

Belongs to the fibril-associated collagens with interrupted helices (FACIT) family. As to quaternary structure, heterotrimer of an alpha 1(IX), an alpha 2(IX) and an alpha 3(IX) chain. The chains are linked to each other by interchain disulfide bonds. Trimers are also cross-linked via hydroxylysines. Covalently linked to the telopeptides of type II collagen by lysine-derived cross-links. Post-translationally, prolines at the third position of the tripeptide repeating unit (G-X-Y) are hydroxylated in some or all of the chains.

It is found in the secreted. The protein localises to the extracellular space. The protein resides in the extracellular matrix. In terms of biological role, structural component of hyaline cartilage and vitreous of the eye. This is Collagen alpha-2(IX) chain from Homo sapiens (Human).